Here is a 475-residue protein sequence, read N- to C-terminus: Sulfate adenylyltransferase subunit 1 (475 aa).

A tr-type G domain is found at 25–239 (KSLLRFLTCG…EVLETVEIQR (215 aa)). Residues 34-41 (GSVDDGKS) are G1. 34 to 41 (GSVDDGKS) contacts GTP. Positions 92–96 (GITID) are G2. The tract at residues 113–116 (DTPG) is G3. GTP contacts are provided by residues 113–117 (DTPGH) and 168–171 (NKMD). The segment at 168 to 171 (NKMD) is G4. The tract at residues 206–208 (SAL) is G5.

This sequence belongs to the TRAFAC class translation factor GTPase superfamily. Classic translation factor GTPase family. CysN/NodQ subfamily. In terms of assembly, heterodimer composed of CysD, the smaller subunit, and CysN.

The enzyme catalyses sulfate + ATP + H(+) = adenosine 5'-phosphosulfate + diphosphate. It functions in the pathway sulfur metabolism; hydrogen sulfide biosynthesis; sulfite from sulfate: step 1/3. Its function is as follows. With CysD forms the ATP sulfurylase (ATPS) that catalyzes the adenylation of sulfate producing adenosine 5'-phosphosulfate (APS) and diphosphate, the first enzymatic step in sulfur assimilation pathway. APS synthesis involves the formation of a high-energy phosphoric-sulfuric acid anhydride bond driven by GTP hydrolysis by CysN coupled to ATP hydrolysis by CysD. The sequence is that of Sulfate adenylyltransferase subunit 1 from Escherichia coli (strain ATCC 8739 / DSM 1576 / NBRC 3972 / NCIMB 8545 / WDCM 00012 / Crooks).